The following is a 532-amino-acid chain: Putative L-lactate permease (532 aa).

The next 14 membrane-spanning stretches (helical) occupy residues 23 to 43 (ALPS…VHLL), 56 to 76 (VVSA…AILF), 101 to 121 (VAQL…ASGF), 129 to 149 (APIL…ALIM), 152 to 172 (VPVS…ALKL), 180 to 200 (IGSI…LLAL), 213 to 233 (IVFI…IAQV), 234 to 254 (NYEF…VWAA), 274 to 294 (AGEV…LIVT), 346 to 366 (LLYV…IPFF), 387 to 407 (PFIA…GGEH), 420 to 440 (ISGS…SFFS), 462 to 482 (GISV…GNMV), and 508 to 528 (IIPM…LVPL).

The protein belongs to the lactate permease family.

It localises to the cell inner membrane. Functionally, may play a role in L-lactate transport. The sequence is that of Putative L-lactate permease from Haemophilus influenzae (strain ATCC 51907 / DSM 11121 / KW20 / Rd).